The chain runs to 347 residues: MTFMQQLQEAGERFRCINGLLWVVFGLGVLKCTTLSLRFLALIFDLFLLPAVNFDKYGAKTGKYCAITGASDGIGKEFARQMAKRGFNLVLISRTQSKLEALQKELEDQHHVVVKILAIDIAEDKESNYESIKELCAQLPITVLVNNVGQSHSIPVPFLETEEKELRNIITINNTATLLITQIIAPKIVETVKAENKKSGTRGLILTMGSFGGLIPTPLLATYSGSKSFLQGWSNSLAGELSKDAIDVELIISYLVTSSMSKIRRSSLMIPNPQQFVKSTLRSVGRRCGSQERYATMTPYWAHAVYQFVITETFGVYSKIVNSINYSFHKSIRIRALKKAARQVKKE.

Residues 20 to 40 (LLWVVFGLGVLKCTTLSLRFL) traverse the membrane as a helical segment. Residues aspartate 120, asparagine 147, tyrosine 223, lysine 227, valine 256, and serine 258 each coordinate NADP(+). Residue tyrosine 223 is the Proton donor of the active site. Lysine 227 functions as the Lowers pKa of active site Tyr in the catalytic mechanism.

The protein belongs to the short-chain dehydrogenases/reductases (SDR) family. As to quaternary structure, interacts with the fatty acid elongation system components ELO3 and TSC13.

Its subcellular location is the endoplasmic reticulum membrane. It carries out the reaction a very-long-chain (3R)-3-hydroxyacyl-CoA + NADP(+) = a very-long-chain 3-oxoacyl-CoA + NADPH + H(+). The catalysed reaction is 3-oxooctadecanoyl-CoA + NADPH + H(+) = (3R)-hydroxyoctadecanoyl-CoA + NADP(+). It catalyses the reaction 3-oxoeicosanoyl-CoA + NADPH + H(+) = (3R)-hydroxyeicosanoyl-CoA + NADP(+). The enzyme catalyses 3-oxodocosanoyl-CoA + NADPH + H(+) = (3R)-hydroxydocosanoyl-CoA + NADP(+). It carries out the reaction 3-oxotetracosanoyl-CoA + NADPH + H(+) = (3R)-hydroxytetracosanoyl-CoA + NADP(+). The catalysed reaction is 3-oxohexacosanoyl-CoA + NADPH + H(+) = (3R)-hydroxyhexacosanoyl-CoA + NADP(+). Its pathway is lipid metabolism; fatty acid biosynthesis. Its function is as follows. Component of the microsomal membrane bound fatty acid elongation system, which produces the 26-carbon very long-chain fatty acids (VLCFA) from palmitate. Catalyzes the reduction of the 3-ketoacyl-CoA intermediate that is formed in each cycle of fatty acid elongation. VLCFAs serve as precursors for ceramide and sphingolipids. The protein is Very-long-chain 3-oxoacyl-CoA reductase (IFA38) of Saccharomyces cerevisiae (strain ATCC 204508 / S288c) (Baker's yeast).